Consider the following 929-residue polypeptide: von Willebrand factor C and EGF domain-containing protein (929 aa).

The signal sequence occupies residues 1-21 (MWARLLLHVAYILIPLLGSSA). In terms of domain architecture, EGF-like 1 spans 70-98 (LCSFGCGSGICIAPNVCSCQDGEQGATCP). The EGF-like 2; calcium-binding domain maps to 142 to 180 (DIDECLSSSCEGHCVNTEGGFVCECGPGMQLSADRHSCQ). 9 cysteine pairs are disulfide-bonded: Cys146–Cys155, Cys151–Cys164, Cys166–Cys179, Cys185–Cys194, Cys190–Cys203, Cys205–Cys218, Cys224–Cys237, Cys233–Cys246, and Cys248–Cys261. The region spanning 181 to 219 (DTDECLGTPCQQRCKNSIGSYKCSCRAGFHLHGNRHSCI) is the EGF-like 3; calcium-binding domain. Residues 220–262 (DVNECRRPQERRVCHHTCHNTVGSFLCTCRPGFRLRSDRVSCE) enclose the EGF-like 4; calcium-binding domain. Disordered stretches follow at residues 291 to 317 (AGRP…RTIS) and 339 to 374 (PSSS…LGAG). Residues 339-353 (PSSSPLGTLGPPSLL) are compositionally biased toward low complexity. VWFC domains follow at residues 376 to 433 (SSCW…PSCT), 433 to 494 (TGCF…GRCY), 491 to 552 (GRCY…FTCR), 558 to 618 (TGCS…PDCS), 619 to 677 (AGCT…PVCH), and 677 to 762 (HDCN…VNCS). Residues Asn454 and Asn464 are each glycosylated (N-linked (GlcNAc...) asparagine). Positions 731-774 (PLEEKQQPSPHGELAKAARNARGDTEVPVNCSSCPGPPSASPTR) are disordered. A compositionally biased stretch (basic and acidic residues) spans 743–755 (ELAKAARNARGDT). An N-linked (GlcNAc...) asparagine glycan is attached at Asn787. Residues 791-807 (IQSASPSPPIAQTSSSP) are compositionally biased toward polar residues. Disordered regions lie at residues 791–861 (IQSA…SSTF) and 879–929 (AETP…NSTI). A compositionally biased stretch (low complexity) spans 889–903 (LSETLTTSSSSQRLS).

It localises to the secreted. Its function is as follows. May be a regulatory element in the beta-catenin signaling pathway and a target for chemoprevention of hapatocellular carcinoma. The protein is von Willebrand factor C and EGF domain-containing protein (Vwce) of Mus musculus (Mouse).